A 186-amino-acid chain; its full sequence is Putative 5'(3')-deoxyribonucleotidase (186 aa).

It belongs to the 5'(3')-deoxyribonucleotidase family. It depends on Mg(2+) as a cofactor.

In terms of biological role, dephosphorylates the 5' and 2'(3')-phosphates of deoxyribonucleotides. In Bordetella parapertussis (strain 12822 / ATCC BAA-587 / NCTC 13253), this protein is Putative 5'(3')-deoxyribonucleotidase.